A 575-amino-acid polypeptide reads, in one-letter code: Alpha-(1,6)-fucosyltransferase (575 aa).

At 1–9 the chain is on the cytoplasmic side; it reads MRPWTGSWR. Residues 10-30 traverse the membrane as a helical; Signal-anchor for type II membrane protein segment; the sequence is WIMLILFAWGTLLFYIGGHLV. The Lumenal segment spans residues 31–575; it reads RDNDHPDHSS…KVPHVPEAEK (545 aa). Intrachain disulfides connect Cys-204–Cys-266, Cys-212–Cys-230, and Cys-218–Cys-222. The GT23 domain maps to 206–493; that stretch reads KAKKLVCNIN…PDASANFHSL (288 aa). A Phosphoserine modification is found at Ser-278. Positions 299–305 match the SH3-binding motif; that stretch reads PRPPYLP. Positions 365-366 are important for donor substrate binding; sequence RR. Cys-465 and Cys-472 are disulfide-bonded. The SH3 domain maps to 502 to 563; that stretch reads QNAHNQIAIY…PSYKVREKIE (62 aa).

Belongs to the glycosyltransferase 23 family. In terms of processing, tyrosine phosphorylated by PKDCC/VLK. As to expression, highest expression found in brain. Also found in heart, lung, spleen and kidney.

The protein resides in the golgi apparatus. The protein localises to the golgi stack membrane. The catalysed reaction is N(4)-{beta-D-GlcNAc-(1-&gt;2)-alpha-D-Man-(1-&gt;3)-[beta-D-GlcNAc-(1-&gt;2)-alpha-D-Man-(1-&gt;6)]-beta-D-Man-(1-&gt;4)-beta-D-GlcNAc-(1-&gt;4)-beta-D-GlcNAc}-L-asparaginyl-[protein] + GDP-beta-L-fucose = an N(4)-{beta-D-GlcNAc-(1-&gt;2)-alpha-D-Man-(1-&gt;3)-[beta-D-GlcNAc-(1-&gt;2)-alpha-D-Man-(1-&gt;6)]-beta-D-Man-(1-&gt;4)-beta-D-GlcNAc-(1-&gt;4)-[alpha-L-Fuc-(1-&gt;6)]-beta-D-GlcNAc}-L-asparaginyl-[protein] + GDP + H(+). The protein operates within protein modification; protein glycosylation. Catalyzes the addition of fucose in alpha 1-6 linkage to the first GlcNAc residue, next to the peptide chains in N-glycans. The polypeptide is Alpha-(1,6)-fucosyltransferase (FUT8) (Bos taurus (Bovine)).